A 175-amino-acid polypeptide reads, in one-letter code: Small ribosomal subunit protein uS7 (175 aa).

This sequence belongs to the universal ribosomal protein uS7 family. In terms of assembly, part of the 30S ribosomal subunit. Contacts proteins S9 and S11.

Functionally, one of the primary rRNA binding proteins, it binds directly to 16S rRNA where it nucleates assembly of the head domain of the 30S subunit. Is located at the subunit interface close to the decoding center, probably blocks exit of the E-site tRNA. The polypeptide is Small ribosomal subunit protein uS7 (Neorickettsia sennetsu (strain ATCC VR-367 / Miyayama) (Ehrlichia sennetsu)).